The sequence spans 373 residues: Leucine aminopeptidase 1 (373 aa).

Residues M1–G18 form the signal peptide. The propeptide occupies A19–A75. Zn(2+) contacts are provided by H176 and D195. The N-linked (GlcNAc...) asparagine glycan is linked to N196. Positions 234 and 261 each coordinate Zn(2+). The N-linked (GlcNAc...) asparagine glycan is linked to N288. C310 and C314 form a disulfide bridge. H343 serves as a coordination point for Zn(2+). An N-linked (GlcNAc...) asparagine glycan is attached at N348.

The protein belongs to the peptidase M28 family. M28E subfamily. Monomer. Zn(2+) is required as a cofactor.

It is found in the secreted. Extracellular aminopeptidase that allows assimilation of proteinaceous substrates. The protein is Leucine aminopeptidase 1 (LAP1) of Arthroderma gypseum (strain ATCC MYA-4604 / CBS 118893) (Microsporum gypseum).